The following is a 155-amino-acid chain: Small ribosomal subunit protein uS7c (155 aa).

Belongs to the universal ribosomal protein uS7 family. In terms of assembly, part of the 30S ribosomal subunit.

It localises to the plastid. The protein localises to the chloroplast. Functionally, one of the primary rRNA binding proteins, it binds directly to 16S rRNA where it nucleates assembly of the head domain of the 30S subunit. The chain is Small ribosomal subunit protein uS7c (rps7) from Silene latifolia (White campion).